The sequence spans 576 residues: Arginine--tRNA ligase (576 aa).

The short motif at 122–132 (PNVAKQMHVGH) is the 'HIGH' region element.

It belongs to the class-I aminoacyl-tRNA synthetase family. In terms of assembly, monomer.

Its subcellular location is the cytoplasm. The enzyme catalyses tRNA(Arg) + L-arginine + ATP = L-arginyl-tRNA(Arg) + AMP + diphosphate. This Photorhabdus laumondii subsp. laumondii (strain DSM 15139 / CIP 105565 / TT01) (Photorhabdus luminescens subsp. laumondii) protein is Arginine--tRNA ligase.